Consider the following 386-residue polypeptide: Benzoyl-CoA reductase subunit C (386 aa).

This sequence belongs to the FldB/FldC dehydratase alpha/beta subunit family. In terms of assembly, heterotetramer composed of A, B, C, and D subunits. It depends on iron-sulfur cluster as a cofactor. The cofactor is an oxidized flavin.

It carries out the reaction cyclohexa-1,5-diene-1-carbonyl-CoA + oxidized 2[4Fe-4S]-[ferredoxin] + 2 ADP + 2 phosphate = reduced 2[4Fe-4S]-[ferredoxin] + benzoyl-CoA + 2 ATP + 2 H2O. It catalyses the reaction 3-hydroxybenzoyl-CoA + AH2 + 2 ATP + 2 H2O = 3-hydroxycyclohexa-1,5-diene-1-carbonyl-CoA + A + 2 ADP + 2 phosphate + 2 H(+). Its function is as follows. Catalyzes the anaerobic reduction of benzoyl-CoA and 3-hydroxybenzoyl-CoA to form cyclohexa-1,5-diene-1-carbonyl-CoA and 3-hydroxycyclohexa-1,5-diene-1-carbonyl-CoA, respectively. The enzyme also reduces other benzoyl-CoA analogs with small substituents at the aromatic ring. In Thauera aromatica, this protein is Benzoyl-CoA reductase subunit C (bcrC).